We begin with the raw amino-acid sequence, 1460 residues long: Nonribosomal peptide synthetase 6 (1460 aa).

The interval glutamate 63 to arginine 468 is adenylation. The Carrier 1 domain occupies glutamate 600 to serine 675. Position 636 is an O-(pantetheine 4'-phosphoryl)serine (serine 636). The interval valine 712–aspartate 1135 is condensation. 2 Carrier domains span residues serine 1168–lysine 1241 and serine 1236–aspartate 1312. 2 positions are modified to O-(pantetheine 4'-phosphoryl)serine: serine 1202 and serine 1273. The interval glutamate 1303 to tyrosine 1324 is disordered. The segment covering serine 1313 to alanine 1322 has biased composition (polar residues).

The protein belongs to the NRP synthetase family.

It functions in the pathway siderophore biosynthesis. NRPS involved in extracellular coprogen-type siderophores biosynthesis. The role of extracellular siderophores in fungal virulence to plants is to supply iron to the fungus during plant infection, but not to act as phytotoxins, depriving their hosts of iron. The polypeptide is Nonribosomal peptide synthetase 6 (Alternaria brassicicola (Dark leaf spot agent)).